The sequence spans 538 residues: MAGPPALPPPETAAAATTAAAASSSAASPHYQEWILDTIDSLRSRKARPDLERICRMVRRRHGPEPERTRAELEKLIQQRAVLRVSYKGSISYRNAARVQPPRRGATPPAPPRAPRGAPAAAAAAAPPPTPAPPPPPAPVAAAAPARAPRAAAAAATAPPSPGPAQPGPRAQRAAPLAAPPPAPAAPPAVAPPAGPRRAPPPAVAAREPPLPPPPQPPAPPQQQQPPPPQPQPPPEGGAVRAGGAARPVSLREVVRYLGGSGGAGGRLTRGRVQGLLEEEAAARGRLERTRLGALALPRGDRPGRAPPAASARPSRSKRGGEERVLEKEEEEDDDEDEDEEDDVSEGSEVPESDRPAGAQHHQLNGERGPQSAKERVKEWTPCGPHQGQDEGRGPAPGSGTRQVFSMAAMNKEGGTASVATGPDSPSPVPLPPGKPALPGADGTPFGCPPGRKEKPSDPVEWTVMDVVEYFTEAGFPEQATAFQEQEIDGKSLLLMQRTDVLTGLSIRLGPALKIYEHHIKVLQQGHFEDDDPDGFLG.

Positions 1–11 (MAGPPALPPPE) are enriched in pro residues. 2 disordered regions span residues 1 to 30 (MAGPPALPPPETAAAATTAAAASSSAASPH) and 92 to 247 (SYRN…GAAR). Residues 12 to 29 (TAAAATTAAAASSSAASP) are compositionally biased toward low complexity. In terms of domain architecture, SAMD1-like winged helix (WH) spans 23–99 (SSSAASPHYQ…SISYRNAARV (77 aa)). Threonine 107 carries the post-translational modification Phosphothreonine. The span at 115–125 (PRGAPAAAAAA) shows a compositional bias: low complexity. Residues 126–139 (APPPTPAPPPPPAP) show a composition bias toward pro residues. A compositionally biased stretch (low complexity) spans 140–158 (VAAAAPARAPRAAAAAATA). Serine 161 carries the post-translational modification Phosphoserine. Over residues 168 to 177 (GPRAQRAAPL) the composition is skewed to low complexity. Residues 178 to 236 (AAPPPAPAAPPAVAPPAGPRRAPPPAVAAREPPLPPPPQPPAPPQQQQPPPPQPQPPPE) are compositionally biased toward pro residues. Residues 237 to 247 (GGAVRAGGAAR) are compositionally biased toward low complexity. A Phosphoserine modification is found at serine 261. Positions 282–291 (AARGRLERTR) are enriched in basic and acidic residues. Residues 282–458 (AARGRLERTR…PPGRKEKPSD (177 aa)) form a disordered region. Over residues 328–351 (KEEEEDDDEDEDEEDDVSEGSEVP) the composition is skewed to acidic residues. The segment covering 425-436 (SPSPVPLPPGKP) has biased composition (pro residues). Positions 462 to 530 (WTVMDVVEYF…KVLQQGHFED (69 aa)) constitute an SAM domain.

As to quaternary structure, homopolymerize into a closed pentameric ring. Interacts (via SAM domain) with L3MBTL3 (via SAM domain); the interaction mediates L3MBTL3 binding to chromatin. Interacts (via WH domain) with KDM1A; the interaction modulates KDM1A function. In terms of tissue distribution, expressed in atherosclerotic lesions, not in normal intima. Expressed in foam cells.

It localises to the nucleus. The protein resides in the chromosome. Its subcellular location is the secreted. Its function is as follows. Unmethylated CpG islands (CGIs)-binding protein which localizes to H3K4me3-decorated CGIs, where it acts as a transcriptional repressor. Tethers L3MBTL3 to chromatin and interacts with the KDM1A histone demethylase complex to modulate H3K4me2 and H3K4me3 levels at CGIs. Plays a role in atherogenesis by binding with LDL on cell surface and promoting LDL oxidation which leads to the formation of foam cell. In Homo sapiens (Human), this protein is Sterile alpha motif domain-containing protein 1.